The sequence spans 180 residues: UPF0398 protein EF_1150 (180 aa).

Belongs to the UPF0398 family.

In Enterococcus faecalis (strain ATCC 700802 / V583), this protein is UPF0398 protein EF_1150.